A 228-amino-acid polypeptide reads, in one-letter code: UPF0758 protein CLI_3057 (228 aa).

The region spanning 106 to 228 is the MPN domain; it reads KINTPLDVSN…YVSMKEKGTI (123 aa). Zn(2+)-binding residues include His-177, His-179, and Asp-190. Positions 177–190 match the JAMM motif motif; it reads HNHPSGDPTPSKED.

Belongs to the UPF0758 family.

The chain is UPF0758 protein CLI_3057 from Clostridium botulinum (strain Langeland / NCTC 10281 / Type F).